The primary structure comprises 1838 residues: Collagen alpha-1(V) chain (1838 aa).

The first 37 residues, Met1 to Ala37, serve as a signal peptide directing secretion. The Laminin G-like domain occupies Asp72 to Cys244. Positions Arg231–Glu443 are nonhelical region. A sulfotyrosine mark is found at Tyr234, Tyr236, Tyr240, Tyr262, and Tyr263. 5 disordered regions span residues Pro242–Glu269, Glu281–Glu457, Pro470–Leu520, Phe526–Gln545, and Gly559–Gln1574. The segment covering Asn258–Glu269 has biased composition (acidic residues). Positions Asp285–Thr304 are enriched in basic and acidic residues. Residues Glu309–Thr323 are compositionally biased toward low complexity. Residues Tyr338, Tyr340, Tyr346, and Tyr347 each carry the sulfotyrosine modification. Positions Pro377–Asn388 are enriched in polar residues. A compositionally biased stretch (acidic residues) spans Gly396–Glu406. 4 positions are modified to sulfotyrosine: Tyr416, Tyr417, Tyr420, and Tyr421. Positions Tyr417–Ser428 are enriched in low complexity. Residues Gly444–Arg558 are interrupted collagenous region. Pro residues predominate over residues Pro470–Thr485. The span at Leu506 to Leu520 shows a compositional bias: low complexity. The segment at Gly559–Gly1570 is triple-helical region. Hydroxyproline occurs at positions 570 and 576. A compositionally biased stretch (low complexity) spans Asp587–Gln597. Pro621 bears the Hydroxyproline mark. Lys627 is subject to 5-hydroxylysine. Pro639 carries the post-translational modification Hydroxyproline. Lys642 is subject to 5-hydroxylysine. A hydroxyproline mark is found at Pro648, Pro654, Pro657, Pro675, and Pro678. Residues Pro671 to Pro686 are compositionally biased toward low complexity. Lys687 is modified (5-hydroxylysine). Residues Lys687–Pro696 show a composition bias toward pro residues. 3 positions are modified to hydroxyproline: Pro690, Pro696, and Pro705. Lys708 bears the 5-hydroxylysine mark. Hydroxyproline occurs at positions 717, 720, 726, and 732. The span at Gln722–Pro741 shows a compositional bias: low complexity. Lys744 carries the 5-hydroxylysine modification. Residues Leu747 to Pro756 show a composition bias toward low complexity. Residues Pro750, Pro756, Pro762, Pro765, and Pro771 each carry the hydroxyproline modification. Lys774 carries the post-translational modification 5-hydroxylysine. 2 positions are modified to hydroxyproline: Pro780 and Pro789. 4 positions are modified to 5-hydroxylysine: Lys795, Lys804, Lys807, and Lys810. Pro816 is subject to Hydroxyproline. Lys819 bears the 5-hydroxylysine mark. Hydroxyproline is present on Pro834. Residues Arg837 to Lys846 are compositionally biased toward basic and acidic residues. Residue Lys846 is modified to 5-hydroxylysine. Residue Pro861 is modified to Hydroxyproline. Lys864 is modified (5-hydroxylysine). Positions Leu867–Pro876 are enriched in low complexity. Pro870, Pro873, and Pro876 each carry hydroxyproline. Lys882 is modified (5-hydroxylysine). Hydroxyproline occurs at positions 888 and 891. Lys897 carries the post-translational modification 5-hydroxylysine. A hydroxyproline mark is found at Pro903 and Pro906. Positions Pro908–Pro917 are enriched in low complexity. Hydroxyproline is present on residues Pro930 and Pro945. Composition is skewed to low complexity over residues Lys971–Thr990 and Val999–Met1011. Pro1017, Pro1020, Pro1023, and Pro1029 each carry hydroxyproline. Residues Ser1088 to Pro1104 show a composition bias toward low complexity. Positions Arg1106 to Pro1115 are enriched in pro residues. The segment covering Ala1116–Val1140 has biased composition (low complexity). 2 positions are modified to hydroxyproline: Pro1221 and Pro1224. Positions Pro1259–Pro1268 are enriched in low complexity. Pro residues-rich tracts occupy residues Thr1380–Ala1398 and Ser1454–Leu1469. 2 positions are modified to hydroxyproline: Pro1467 and Pro1470. The segment covering Pro1485–Pro1494 has biased composition (low complexity). The span at Pro1526–Pro1541 shows a compositional bias: pro residues. Over residues Lys1542 to Lys1554 the composition is skewed to low complexity. Residues Pro1560–Pro1569 are compositionally biased toward pro residues. The tract at residues Glu1571–Ala1605 is nonhelical region. A sulfotyrosine mark is found at Tyr1601 and Tyr1604. Positions Asp1606–Gly1838 are cleaved as a propeptide — C-terminal propeptide. The 229-residue stretch at Glu1609–Met1837 folds into the Fibrillar collagen NC1 domain. 3 disulfide bridges follow: Cys1639-Cys1671, Cys1680-Cys1835, and Cys1746-Cys1789. Ca(2+) contacts are provided by Asp1657, Asn1659, Gln1660, Cys1662, and Asp1665.

The protein belongs to the fibrillar collagen family. In terms of assembly, trimers of two alpha 1(V) and one alpha 2(V) chains in most tissues and trimers of one alpha 1(V), one alpha 2(V), and one alpha 3(V) chains in placenta. Interacts with CSPG4. Prolines at the third position of the tripeptide repeating unit (G-X-Y) are hydroxylated in some or all of the chains. In terms of processing, sulfated on 40% of tyrosines.

It is found in the secreted. The protein localises to the extracellular space. Its subcellular location is the extracellular matrix. Its function is as follows. Type V collagen is a member of group I collagen (fibrillar forming collagen). It is a minor connective tissue component of nearly ubiquitous distribution. Type V collagen binds to DNA, heparan sulfate, thrombospondin, heparin, and insulin. The polypeptide is Collagen alpha-1(V) chain (COL5A1) (Homo sapiens (Human)).